A 72-amino-acid polypeptide reads, in one-letter code: Translation initiation factor IF-1 (72 aa).

Residues M1–K72 enclose the S1-like domain.

Belongs to the IF-1 family. As to quaternary structure, component of the 30S ribosomal translation pre-initiation complex which assembles on the 30S ribosome in the order IF-2 and IF-3, IF-1 and N-formylmethionyl-tRNA(fMet); mRNA recruitment can occur at any time during PIC assembly.

It is found in the cytoplasm. In terms of biological role, one of the essential components for the initiation of protein synthesis. Stabilizes the binding of IF-2 and IF-3 on the 30S subunit to which N-formylmethionyl-tRNA(fMet) subsequently binds. Helps modulate mRNA selection, yielding the 30S pre-initiation complex (PIC). Upon addition of the 50S ribosomal subunit IF-1, IF-2 and IF-3 are released leaving the mature 70S translation initiation complex. This is Translation initiation factor IF-1 from Paracoccus denitrificans (strain Pd 1222).